The following is a 59-amino-acid chain: Protein translocase subunit SecE (59 aa).

Residues 30-50 (ITVITTVIFFAIFFALIDSGI) traverse the membrane as a helical segment.

Belongs to the SecE/SEC61-gamma family. Component of the Sec protein translocase complex. Heterotrimer consisting of SecY, SecE and SecG subunits. The heterotrimers can form oligomers, although 1 heterotrimer is thought to be able to translocate proteins. Interacts with the ribosome. Interacts with SecDF, and other proteins may be involved. Interacts with SecA.

The protein localises to the cell membrane. In terms of biological role, essential subunit of the Sec protein translocation channel SecYEG. Clamps together the 2 halves of SecY. May contact the channel plug during translocation. This is Protein translocase subunit SecE from Bacillus licheniformis.